Here is a 520-residue protein sequence, read N- to C-terminus: 2-isopropylmalate synthase (520 aa).

In terms of domain architecture, Pyruvate carboxyltransferase spans 12–274 (IRIFDTTLRD…DSAINTPRIV (263 aa)). The Mn(2+) site is built by Asp-21, His-209, His-211, and Asn-245. The regulatory domain stretch occupies residues 396 to 520 (RLASMTISDV…VVAGKTAAVA (125 aa)).

It belongs to the alpha-IPM synthase/homocitrate synthase family. LeuA type 1 subfamily. In terms of assembly, homodimer. It depends on Mn(2+) as a cofactor.

It is found in the cytoplasm. The enzyme catalyses 3-methyl-2-oxobutanoate + acetyl-CoA + H2O = (2S)-2-isopropylmalate + CoA + H(+). The protein operates within amino-acid biosynthesis; L-leucine biosynthesis; L-leucine from 3-methyl-2-oxobutanoate: step 1/4. Its function is as follows. Catalyzes the condensation of the acetyl group of acetyl-CoA with 3-methyl-2-oxobutanoate (2-ketoisovalerate) to form 3-carboxy-3-hydroxy-4-methylpentanoate (2-isopropylmalate). This chain is 2-isopropylmalate synthase, found in Xanthomonas axonopodis pv. citri (strain 306).